The primary structure comprises 420 residues: MLKAVILIGGPQKGTRFRPLSFEVPKPLFPVAGVPMIQHHIEACAQVPGMQEILLIGFYQPDEPLTQFLEAAQQEFNLPVRYLQEFAPLGTGGGLYHFRDQILAGSPEAFFVLNADVCSDFPLSAMLEAHRRQRHPFLLLGTTANRTQSLNYGCIVENPQTHEVLHYVEKPSTFISDIINCGIYLFSPEALKPLRDVFQRNQQDGQLEDSPGLWPGAGTIRLEQDVFSALAGQGQIYVHLTDGIWSQIKSAGSALYASRLYLSRYQDTHPERLAKHTPGGPWIRGNVYIHPTAKVAPSAVLGPNVSIGKGVTVGEGVRLRESIVLHGATLQEHTCVLHSIVGWGSTVGRWARVEGTPSDPNPNDPRARMDSESLFKDGKLLPAITILGCRVRIPAEVLILNSIVLPHKELSRSFTNQIIL.

Residues 2-251 are substrate-binding domain; that stretch reads LKAVILIGGP…DGIWSQIKSA (250 aa). GDP-alpha-D-mannose is bound by residues E85 and Q247. The tract at residues 273–420 is hexapeptide repeat domain; that stretch reads LAKHTPGGPW…SRSFTNQIIL (148 aa). Residues 356–384 are C-loop; the sequence is TPSDPNPNDPRARMDSESLFKDGKLLPAI.

This sequence belongs to the transferase hexapeptide repeat family. As to quaternary structure, component of the GMPPA-GMPPB mannose-1-phosphate guanylyltransferase complex composed of 4 GMPPA subunits and 8 GMPPB subunits; the complex is organized into three layers, a central layer made up of 2 GMPPA dimers sandwiched between two layers each made up of 2 GMPPB dimers. As to expression, expressed in fibroblasts (at protein level).

It is found in the cytoplasm. Regulatory subunit of the GMPPA-GMPPB mannose-1-phosphate guanylyltransferase complex; reduces the catalytic activity of GMPPB when part of the complex. Mediates allosteric feedback inhibition of GMPPB catalytic activity upon binding GDP-alpha-D-mannose. Together with GMPPB regulates GDP-alpha-D-mannose levels. The polypeptide is Mannose-1-phosphate guanylyltransferase regulatory subunit alpha (Homo sapiens (Human)).